The sequence spans 173 residues: MENIIARRYAKAIASRADINDFYQNLCILNSAFVLPKFKNIIESNEIKKERKMEFLDSFFHIKNSSFQNFLRLLIENSRLECIPQIVKELERQKAFKENIFVGIVHSKEKLSQENLKDLEVKLNKKFNANIKLNNKISQDDSVKIELEELGYELSFSMKALQNKLNEYVLKII.

It belongs to the ATPase delta chain family. As to quaternary structure, F-type ATPases have 2 components, F(1) - the catalytic core - and F(0) - the membrane proton channel. F(1) has five subunits: alpha(3), beta(3), gamma(1), delta(1), epsilon(1). F(0) has three main subunits: a(1), b(2) and c(10-14). The alpha and beta chains form an alternating ring which encloses part of the gamma chain. F(1) is attached to F(0) by a central stalk formed by the gamma and epsilon chains, while a peripheral stalk is formed by the delta and b chains.

The protein resides in the cell inner membrane. F(1)F(0) ATP synthase produces ATP from ADP in the presence of a proton or sodium gradient. F-type ATPases consist of two structural domains, F(1) containing the extramembraneous catalytic core and F(0) containing the membrane proton channel, linked together by a central stalk and a peripheral stalk. During catalysis, ATP synthesis in the catalytic domain of F(1) is coupled via a rotary mechanism of the central stalk subunits to proton translocation. In terms of biological role, this protein is part of the stalk that links CF(0) to CF(1). It either transmits conformational changes from CF(0) to CF(1) or is implicated in proton conduction. This is ATP synthase subunit delta from Campylobacter jejuni subsp. doylei (strain ATCC BAA-1458 / RM4099 / 269.97).